An 84-amino-acid polypeptide reads, in one-letter code: Mitochondrial import inner membrane translocase subunit tim9 (84 aa).

The Twin CX3C motif motif lies at 35 to 59 (CFSDCVQDFTSSKLSNKESECIAKC). 2 disulfides stabilise this stretch: Cys-35-Cys-59 and Cys-39-Cys-55.

Belongs to the small Tim family. As to quaternary structure, heterohexamer; composed of 3 copies of TIM9 and 3 copies of TIM10, named soluble 70 kDa complex. Associates with the TIM22 complex, whose core is composed of TIM22 and TIM54. Interacts with the transmembrane regions of multi-pass transmembrane proteins in transit.

Its subcellular location is the mitochondrion inner membrane. Functionally, mitochondrial intermembrane chaperone that participates in the import and insertion of multi-pass transmembrane proteins into the mitochondrial inner membrane. Also required for the transfer of beta-barrel precursors from the TOM complex to the sorting and assembly machinery (SAM complex) of the outer membrane. Acts as a chaperone-like protein that protects the hydrophobic precursors from aggregation and guide them through the mitochondrial intermembrane space. The sequence is that of Mitochondrial import inner membrane translocase subunit tim9 (tim9) from Schizosaccharomyces pombe (strain 972 / ATCC 24843) (Fission yeast).